The following is a 269-amino-acid chain: Triosephosphate isomerase (269 aa).

8–10 (NWK) is a substrate binding site. His105 serves as the catalytic Electrophile. The Proton acceptor role is filled by Glu183. Residues Gly189, Ser227, and 248-249 (GG) contribute to the substrate site.

This sequence belongs to the triosephosphate isomerase family. In terms of assembly, homodimer.

The protein localises to the cytoplasm. The enzyme catalyses D-glyceraldehyde 3-phosphate = dihydroxyacetone phosphate. It participates in carbohydrate biosynthesis; gluconeogenesis. Its pathway is carbohydrate degradation; glycolysis; D-glyceraldehyde 3-phosphate from glycerone phosphate: step 1/1. In terms of biological role, involved in the gluconeogenesis. Catalyzes stereospecifically the conversion of dihydroxyacetone phosphate (DHAP) to D-glyceraldehyde-3-phosphate (G3P). The sequence is that of Triosephosphate isomerase from Psychrobacter cryohalolentis (strain ATCC BAA-1226 / DSM 17306 / VKM B-2378 / K5).